The chain runs to 398 residues: Acetylornithine aminotransferase (398 aa).

Phe-129 is a binding site for pyridoxal 5'-phosphate. A N(2)-acetyl-L-ornithine-binding site is contributed by Arg-132. 214 to 217 (DEVQ) contributes to the pyridoxal 5'-phosphate binding site. Lys-243 carries the post-translational modification N6-(pyridoxal phosphate)lysine. Ser-271 contributes to the N(2)-acetyl-L-ornithine binding site. Thr-272 is a pyridoxal 5'-phosphate binding site.

This sequence belongs to the class-III pyridoxal-phosphate-dependent aminotransferase family. ArgD subfamily. Homodimer. Pyridoxal 5'-phosphate serves as cofactor.

The protein resides in the cytoplasm. The enzyme catalyses N(2)-acetyl-L-ornithine + 2-oxoglutarate = N-acetyl-L-glutamate 5-semialdehyde + L-glutamate. It functions in the pathway amino-acid biosynthesis; L-arginine biosynthesis; N(2)-acetyl-L-ornithine from L-glutamate: step 4/4. The polypeptide is Acetylornithine aminotransferase (Neisseria meningitidis serogroup B (strain ATCC BAA-335 / MC58)).